Consider the following 83-residue polypeptide: uncharacterized protein (83 aa).

This is an uncharacterized protein from Escherichia coli (Bacteriophage T4).